A 416-amino-acid chain; its full sequence is uncharacterized protein (416 aa).

An N-acetyltransferase domain is found at 3-150 (LDVRTITPSE…SVYRAGLDAR (148 aa)). Acetyl-CoA-binding positions include 83–85 (VTV) and 91–96 (RRGLLS). The active-site Proton donor is tyrosine 124. The active-site Proton acceptor; via carboxylate is phenylalanine 416.

This sequence belongs to the acetyltransferase Eis family. As to quaternary structure, homohexamer; trimer of dimers.

This is an uncharacterized protein from Streptomyces griseus subsp. griseus (strain JCM 4626 / CBS 651.72 / NBRC 13350 / KCC S-0626 / ISP 5235).